A 381-amino-acid polypeptide reads, in one-letter code: Alkanesulfonate monooxygenase (381 aa).

This sequence belongs to the SsuD family. Homotetramer.

It catalyses the reaction an alkanesulfonate + FMNH2 + O2 = an aldehyde + FMN + sulfite + H2O + 2 H(+). In terms of biological role, catalyzes the desulfonation of aliphatic sulfonates. The protein is Alkanesulfonate monooxygenase of Escherichia coli (strain SE11).